The following is a 326-amino-acid chain: Pyruvate dehydrogenase E1 component subunit alpha (326 aa).

As to quaternary structure, heterodimer of an alpha and a beta chain. The cofactor is thiamine diphosphate.

The enzyme catalyses N(6)-[(R)-lipoyl]-L-lysyl-[protein] + pyruvate + H(+) = N(6)-[(R)-S(8)-acetyldihydrolipoyl]-L-lysyl-[protein] + CO2. In terms of biological role, the pyruvate dehydrogenase complex catalyzes the overall conversion of pyruvate to acetyl-CoA and CO(2). It contains multiple copies of three enzymatic components: pyruvate dehydrogenase (E1), dihydrolipoamide acetyltransferase (E2) and lipoamide dehydrogenase (E3). This is Pyruvate dehydrogenase E1 component subunit alpha (pdhA) from Rickettsia typhi (strain ATCC VR-144 / Wilmington).